A 359-amino-acid chain; its full sequence is 3-dehydroquinate synthase (359 aa).

Residues 71-76 (DGEAYK), 105-109 (GVIGD), 129-130 (TT), K142, and K151 contribute to the NAD(+) site. Zn(2+)-binding residues include E184, H247, and H264.

Belongs to the sugar phosphate cyclases superfamily. Dehydroquinate synthase family. Co(2+) is required as a cofactor. Requires Zn(2+) as cofactor. The cofactor is NAD(+).

Its subcellular location is the cytoplasm. The enzyme catalyses 7-phospho-2-dehydro-3-deoxy-D-arabino-heptonate = 3-dehydroquinate + phosphate. It functions in the pathway metabolic intermediate biosynthesis; chorismate biosynthesis; chorismate from D-erythrose 4-phosphate and phosphoenolpyruvate: step 2/7. Catalyzes the conversion of 3-deoxy-D-arabino-heptulosonate 7-phosphate (DAHP) to dehydroquinate (DHQ). This is 3-dehydroquinate synthase from Burkholderia ambifaria (strain ATCC BAA-244 / DSM 16087 / CCUG 44356 / LMG 19182 / AMMD) (Burkholderia cepacia (strain AMMD)).